The following is a 287-amino-acid chain: MAGAKEIRSKIASIKSTQKITSAMEKVAVSKMRKAQQRMAAGRPYAERIRQVIGHLAKANPEYRHSFMVERDVKRVGYIVVTSDRGLCGGLNINLFKALLKSLKEWRDQKVEADFCVVGTKGASFFRSNGGNVVAAISKLGEEPSINDLIGSVKVVLDAYAEGRIDRLYLVSNKFVNTMTQKPEVQQLLPLAASDAQGVQKGLWDYVYEPDAQQLLDALLVRYIESQVYQSVVENSACEQAARMIAMKNATDNAGDLIKDLQLVYNKARQAAITQEISEIVGGAAAV.

The protein belongs to the ATPase gamma chain family. As to quaternary structure, F-type ATPases have 2 components, CF(1) - the catalytic core - and CF(0) - the membrane proton channel. CF(1) has five subunits: alpha(3), beta(3), gamma(1), delta(1), epsilon(1). CF(0) has three main subunits: a, b and c.

It is found in the cell inner membrane. In terms of biological role, produces ATP from ADP in the presence of a proton gradient across the membrane. The gamma chain is believed to be important in regulating ATPase activity and the flow of protons through the CF(0) complex. This chain is ATP synthase gamma chain, found in Ectopseudomonas mendocina (strain ymp) (Pseudomonas mendocina).